The primary structure comprises 301 residues: Pseudouridine-5'-phosphate glycosidase (301 aa).

Glutamate 25 serves as the catalytic Proton donor. Substrate is bound by residues lysine 86 and valine 106. A Mn(2+)-binding site is contributed by aspartate 138. Position 140 to 142 (140 to 142 (SAD)) interacts with substrate. The active-site Nucleophile is the lysine 159.

Belongs to the pseudouridine-5'-phosphate glycosidase family. In terms of assembly, homotrimer. Mn(2+) serves as cofactor.

The enzyme catalyses D-ribose 5-phosphate + uracil = psi-UMP + H2O. Functionally, catalyzes the reversible cleavage of pseudouridine 5'-phosphate (PsiMP) to ribose 5-phosphate and uracil. Functions biologically in the cleavage direction, as part of a pseudouridine degradation pathway. This is Pseudouridine-5'-phosphate glycosidase from Geobacillus kaustophilus (strain HTA426).